Here is a 238-residue protein sequence, read N- to C-terminus: Ribonuclease PH (238 aa).

Phosphate is bound by residues Arg-86 and 124–126 (GTR).

Belongs to the RNase PH family. In terms of assembly, homohexameric ring arranged as a trimer of dimers.

It carries out the reaction tRNA(n+1) + phosphate = tRNA(n) + a ribonucleoside 5'-diphosphate. Phosphorolytic 3'-5' exoribonuclease that plays an important role in tRNA 3'-end maturation. Removes nucleotide residues following the 3'-CCA terminus of tRNAs; can also add nucleotides to the ends of RNA molecules by using nucleoside diphosphates as substrates, but this may not be physiologically important. Probably plays a role in initiation of 16S rRNA degradation (leading to ribosome degradation) during starvation. The protein is Ribonuclease PH of Geobacter sulfurreducens (strain ATCC 51573 / DSM 12127 / PCA).